The following is a 32-amino-acid chain: Dermatoxin-J2 (32 aa).

Gln32 carries the post-translational modification Glutamine amide.

As to expression, expressed by the skin glands.

Its subcellular location is the secreted. Its function is as follows. Antimicrobial peptide. This chain is Dermatoxin-J2, found in Phasmahyla jandaia (Jandaia leaf frog).